Here is a 453-residue protein sequence, read N- to C-terminus: Ribulose bisphosphate carboxylase large chain (453 aa).

A propeptide spanning residues 1 to 2 is cleaved from the precursor; the sequence is MS. N-acetylproline is present on P3. K14 carries the post-translational modification N6,N6,N6-trimethyllysine. Residues N123 and T173 each coordinate substrate. K175 functions as the Proton acceptor in the catalytic mechanism. A substrate-binding site is contributed by K177. 3 residues coordinate Mg(2+): K201, D203, and E204. K201 carries the post-translational modification N6-carboxylysine. Catalysis depends on H294, which acts as the Proton acceptor. R295, H327, and S379 together coordinate substrate.

It belongs to the RuBisCO large chain family. Type I subfamily. Heterohexadecamer of 8 large chains and 8 small chains; disulfide-linked. The disulfide link is formed within the large subunit homodimers. Requires Mg(2+) as cofactor. Post-translationally, the disulfide bond which can form in the large chain dimeric partners within the hexadecamer appears to be associated with oxidative stress and protein turnover.

It is found in the plastid. It localises to the chloroplast. The catalysed reaction is 2 (2R)-3-phosphoglycerate + 2 H(+) = D-ribulose 1,5-bisphosphate + CO2 + H2O. It catalyses the reaction D-ribulose 1,5-bisphosphate + O2 = 2-phosphoglycolate + (2R)-3-phosphoglycerate + 2 H(+). In terms of biological role, ruBisCO catalyzes two reactions: the carboxylation of D-ribulose 1,5-bisphosphate, the primary event in carbon dioxide fixation, as well as the oxidative fragmentation of the pentose substrate in the photorespiration process. Both reactions occur simultaneously and in competition at the same active site. In Sherardia arvensis (Blue field-madder), this protein is Ribulose bisphosphate carboxylase large chain.